The chain runs to 606 residues: CDPK-related kinase 8 (606 aa).

A compositionally biased stretch (polar residues) spans 1–14 (MGGCTSKPSTSSGR). The segment at 1–132 (MGGCTSKPST…TEVPQREEEE (132 aa)) is disordered. A lipid anchor (N-myristoyl glycine) is attached at glycine 2. The span at 98–110 (KHIRAALRRRKGK) shows a compositional bias: basic residues. A Protein kinase domain is found at 150–412 (VELGEEIGRG…ASQALMHPWI (263 aa)). ATP-binding positions include 156–164 (IGRGHFGYT) and lysine 182. Aspartate 278 (proton acceptor) is an active-site residue. Serine 318 bears the Phosphoserine mark. The autoinhibitory domain stretch occupies residues 418–448 (DMNIPFDILIFRQMKAYLRSSSLRKAALRAL). Residues 437–457 (SSSLRKAALRALSKTLIKDEI) are calmodulin binding (CaMBD). EF-hand domains lie at 455 to 491 (DEIL…ATEA), 492 to 527 (MKES…VHQH), 528 to 567 (ESLD…GPSI), and 570 to 599 (HSVL…VSVR). Ca(2+) is bound by residues asparagine 470, aspartate 472, glutamate 516, aspartate 545, asparagine 547, asparagine 549, glutamate 556, aspartate 581, and lysine 583. The residue at position 585 (serine 585) is a Phosphoserine.

It belongs to the protein kinase superfamily. Ser/Thr protein kinase family. CDPK subfamily. Binds calmodulin (CaM) in a calcium-dependent manner. In terms of processing, autophosphorylated.

It is found in the membrane. It catalyses the reaction L-seryl-[protein] + ATP = O-phospho-L-seryl-[protein] + ADP + H(+). The enzyme catalyses L-threonyl-[protein] + ATP = O-phospho-L-threonyl-[protein] + ADP + H(+). Activated by calcium and calmodulin. Autophosphorylation may play an important role in the regulation of the kinase activity. Functionally, may play a role in signal transduction pathways that involve calcium as a second messenger. In Arabidopsis thaliana (Mouse-ear cress), this protein is CDPK-related kinase 8 (CRK8).